A 219-amino-acid chain; its full sequence is uncharacterized protein (219 aa).

2 consecutive transmembrane segments (helical) span residues 8-28 (MILFLLVGLAVVLSGCATLSV) and 194-214 (GIPGFEAALAIVGLLAAGLLF).

The protein localises to the cell membrane. This is an uncharacterized protein from Archaeoglobus fulgidus (strain ATCC 49558 / DSM 4304 / JCM 9628 / NBRC 100126 / VC-16).